The sequence spans 215 residues: Translation initiation factor 6 (215 aa).

The protein belongs to the eIF-6 family.

In terms of biological role, binds to the 50S ribosomal subunit and prevents its association with the 30S ribosomal subunit to form the 70S initiation complex. The protein is Translation initiation factor 6 of Archaeoglobus fulgidus (strain ATCC 49558 / DSM 4304 / JCM 9628 / NBRC 100126 / VC-16).